Consider the following 496-residue polypeptide: Tyrosine-protein kinase Srms (496 aa).

One can recognise an SH3 domain in the interval 55-116 (PRARLFRALY…PVTYLAKATP (62 aa)). Positions 124-216 (WYFSGISRAQ…LIQNPLLQPC (93 aa)) constitute an SH2 domain. Positions 234-495 (FVLRRKLGEG…AINRRLHLGL (262 aa)) constitute a Protein kinase domain. ATP contacts are provided by residues 240-248 (LGEGFFGEV) and Lys262. Asp354 (proton acceptor) is an active-site residue. Tyr384 carries the phosphotyrosine; by autocatalysis modification.

Belongs to the protein kinase superfamily. Tyr protein kinase family. SRC subfamily. Interacts (via the SH2 and SH3 domains) with DOK1. Interacts with KHDRBS1/SAM68 and VIM. In terms of tissue distribution, higher expression in liver, lung, thymus and skin than in brain, kidney, heart and spleen. In skin, highly expressed in keratinocytes. Abundant in lung, liver, spleen, kidney and testis and is also detected in the cerebrum.

Its subcellular location is the cytoplasm. The catalysed reaction is L-tyrosyl-[protein] + ATP = O-phospho-L-tyrosyl-[protein] + ADP + H(+). Non-receptor tyrosine-protein kinase which phosphorylates DOK1 on tyrosine residues. Also phosphorylates KHDRBS1/SAM68 and VIM on tyrosine residues. Phosphorylation of KHDRBS1 is EGF-dependent. Phosphorylates OTUB1, promoting deubiquitination of RPTOR. The chain is Tyrosine-protein kinase Srms (Srms) from Mus musculus (Mouse).